A 144-amino-acid chain; its full sequence is Gas vesicle protein I1 (144 aa).

The disordered stretch occupies residues 1–144 (MSDKQQQKHK…SPTEDEVNDE (144 aa)). 2 stretches are compositionally biased toward basic residues: residues 7–17 (QKHKQKARQAR) and 26–46 (KARRNLLRQREKLARRRTRNR). A compositionally biased stretch (polar residues) spans 75 to 94 (MPPQKSNAENAVRNSHSTVP). Low complexity predominate over residues 122–136 (SEASAPSDESASGSP).

It belongs to the gas vesicle GvpI family. In terms of assembly, gvpF to GvpM interact with each other in vitro, and may form multi-subunit complex(es). Interacts with GvpC1 and GvpO.

The protein resides in the gas vesicle. Proteins GvpF to GvpM might be involved in nucleating gas vesicle formation. A minor component of the gas vesicle. Gas vesicles are hollow, gas filled proteinaceous nanostructures found in several microbial planktonic microorganisms. They allow positioning of halobacteria at the optimal depth for growth in the poorly aerated, shallow brine pools of their habitat. Its function is as follows. Expression of a 9.5 kb p-vac DNA fragment containing 2 divergently transcribed regions (gvpD-gvpE-gvpF-gvpG-gvpH-gvpI-gvpJ-gvpK-gvpL-gvpM and gvpA-gvpC-gvpN-gvpO) allows H.volcanii to produce gas vesicles. A similar region restores gas vesicle production in H.halobium without the p-vac locus, but it still has the c-vac locus. The sequence is that of Gas vesicle protein I1 (gvpI11) from Halobacterium salinarum (strain ATCC 700922 / JCM 11081 / NRC-1) (Halobacterium halobium).